The sequence spans 207 residues: Ribosomal RNA small subunit methyltransferase G (207 aa).

S-adenosyl-L-methionine-binding positions include G73, L78, 124–125 (VE), and R139.

It belongs to the methyltransferase superfamily. RNA methyltransferase RsmG family.

It localises to the cytoplasm. It catalyses the reaction guanosine(527) in 16S rRNA + S-adenosyl-L-methionine = N(7)-methylguanosine(527) in 16S rRNA + S-adenosyl-L-homocysteine. In terms of biological role, specifically methylates the N7 position of guanine in position 527 of 16S rRNA. In Escherichia coli O17:K52:H18 (strain UMN026 / ExPEC), this protein is Ribosomal RNA small subunit methyltransferase G.